Consider the following 268-residue polypeptide: MNNIMIGRFVPGNSWIHRLDPRTKMIVTFVYIIVMLWASNWQTYAWTAAFVVAMVKLTDQPFKLYWDGLKPIFWLILFTVILQLLFTPGTPILFSVGPFQVTVPGILNAIYVMVRFVLIILMSTILTLTTPPTSIANALESLLSPLKKIGVPVAELALMLAIALRFVPLLMDEMQKIMNAQKSRGMSFSTGGPIKRAKAIIPLLIPLFIGALQRALDLANAMEVRGFKDAVQRTKYRILSYQKIDKVAFAALIGFVIIFFVIKTWLHG.

Transmembrane regions (helical) follow at residues 26 to 46, 72 to 92, 106 to 126, 149 to 169, and 247 to 267; these read IVTF…TYAW, IFWL…GTPI, ILNA…STIL, IGVP…FVPL, and VAFA…TWLH.

This sequence belongs to the energy-coupling factor EcfT family. Forms a stable energy-coupling factor (ECF) transporter complex composed of 2 membrane-embedded substrate-binding proteins (S component), 2 ATP-binding proteins (A component) and 2 transmembrane proteins (T component). May be able to interact with more than 1 S component at a time.

It localises to the cell membrane. Its function is as follows. Transmembrane (T) component of an energy-coupling factor (ECF) ABC-transporter complex. Unlike classic ABC transporters this ECF transporter provides the energy necessary to transport a number of different substrates. This Leuconostoc gelidum subsp. gasicomitatum (strain DSM 15947 / CCUG 46042 / CECT 5767 / JCM 12535 / LMG 18811 / NBRC 113245 / TB1-10) (Leuconostoc gasicomitatum) protein is Energy-coupling factor transporter transmembrane protein EcfT.